The sequence spans 427 residues: tRNA(Ile)-lysidine synthase (427 aa).

ATP is bound at residue 25-30 (SGGLDS).

It belongs to the tRNA(Ile)-lysidine synthase family.

It is found in the cytoplasm. The enzyme catalyses cytidine(34) in tRNA(Ile2) + L-lysine + ATP = lysidine(34) in tRNA(Ile2) + AMP + diphosphate + H(+). In terms of biological role, ligates lysine onto the cytidine present at position 34 of the AUA codon-specific tRNA(Ile) that contains the anticodon CAU, in an ATP-dependent manner. Cytidine is converted to lysidine, thus changing the amino acid specificity of the tRNA from methionine to isoleucine. This chain is tRNA(Ile)-lysidine synthase, found in Histophilus somni (strain 2336) (Haemophilus somnus).